The chain runs to 140 residues: Nucleoside diphosphate kinase (140 aa).

The ATP site is built by lysine 11, phenylalanine 59, arginine 87, threonine 93, arginine 104, and asparagine 114. Catalysis depends on histidine 117, which acts as the Pros-phosphohistidine intermediate.

Belongs to the NDK family. In terms of assembly, homotetramer. Mg(2+) is required as a cofactor.

The protein localises to the cytoplasm. The enzyme catalyses a 2'-deoxyribonucleoside 5'-diphosphate + ATP = a 2'-deoxyribonucleoside 5'-triphosphate + ADP. It catalyses the reaction a ribonucleoside 5'-diphosphate + ATP = a ribonucleoside 5'-triphosphate + ADP. Functionally, major role in the synthesis of nucleoside triphosphates other than ATP. The ATP gamma phosphate is transferred to the NDP beta phosphate via a ping-pong mechanism, using a phosphorylated active-site intermediate. This Bartonella tribocorum (strain CIP 105476 / IBS 506) protein is Nucleoside diphosphate kinase.